The sequence spans 399 residues: V-set and immunoglobulin domain-containing protein 4 (399 aa).

An N-terminal signal peptide occupies residues 1-19 (MGILLGLLLLGHLTVDTYG). At 20-283 (RPILEVPESV…TSAGPGKSLP (264 aa)) the chain is on the extracellular side. Ig-like domains are found at residues 21–131 (PILE…DKIT) and 143–226 (PTVT…SDIV). Disulfide bonds link Cys41–Cys113 and Cys165–Cys211. The helical transmembrane segment at 284 to 304 (VFAIILIISLCCMVVFTMAYI) threads the bilayer. Over 305 to 399 (MLCRKTSQQE…FLATEGKSVC (95 aa)) the chain is Cytoplasmic.

In terms of tissue distribution, abundantly expressed in several fetal tissues. In adult tissues, highest expression in lung and placenta. Expressed in resting macrophages.

The protein resides in the membrane. In terms of biological role, phagocytic receptor, strong negative regulator of T-cell proliferation and IL2 production. Potent inhibitor of the alternative complement pathway convertases. This chain is V-set and immunoglobulin domain-containing protein 4 (VSIG4), found in Homo sapiens (Human).